The primary structure comprises 130 residues: Arsenical-resistance protein 2 (130 aa).

A Rhodanese domain is found at 17–124 (QRKDFQVVDL…WETHCRESNL (108 aa)).

Functionally, involved in resistance to arsenic compounds. This chain is Arsenical-resistance protein 2 (ARR2), found in Saccharomyces cerevisiae (strain ATCC 204508 / S288c) (Baker's yeast).